Reading from the N-terminus, the 485-residue chain is Lysophospholipid acyltransferase 5 (485 aa).

Position 2 is an N-acetylalanine (Ala2). 7 helical membrane passes run 35-55 (ASEQALRLIISIFLGYPFALF), 82-102 (YNFGTQLYHSLLCIVLQFLIL), 108-128 (TITAVLTTFCVQMGYLLAGYY), 139-158 (WTMPHCVLTLKLIGLAMDYY), 176-196 (IWGVPSLLEISGFSYFYGAFL), 232-252 (LALGLVYLVGYTLLSPHITED), and 283-303 (VTCWLVTEGVCILTGLGFNGL). Active-site residues include Asn336 and His372. 3 consecutive transmembrane segments (helical) span residues 362–382 (GLSLLFLALWHGLHSGYLVCF), 420–440 (LAQQTIHWLFMGYSMTAFCLF), and 448–468 (VYKSIYFLGHVFFLSLLFILP). The Di-lysine motif motif lies at 482–485 (KKME).

The protein belongs to the membrane-bound acyltransferase family.

The protein localises to the endoplasmic reticulum membrane. It carries out the reaction a 1-acyl-sn-glycero-3-phosphocholine + an acyl-CoA = a 1,2-diacyl-sn-glycero-3-phosphocholine + CoA. The catalysed reaction is a 1-acyl-sn-glycero-3-phosphoethanolamine + an acyl-CoA = a 1,2-diacyl-sn-glycero-3-phosphoethanolamine + CoA. It catalyses the reaction a 1-acyl-sn-glycero-3-phospho-L-serine + an acyl-CoA = a 1,2-diacyl-sn-glycero-3-phospho-L-serine + CoA. The enzyme catalyses (9Z,12Z)-octadecadienoyl-CoA + a 1-acyl-sn-glycero-3-phosphocholine = 1-acyl-2-(9Z,12Z)-octadecadienoyl-sn-glycero-3-phosphocholine + CoA. It carries out the reaction (5Z,8Z,11Z,14Z)-eicosatetraenoyl-CoA + a 1-acyl-sn-glycero-3-phosphocholine = 1-acyl-2-(5Z,8Z,11Z,14Z-eicosatetraenoyl)-sn-glycero-3-phosphocholine + CoA. The catalysed reaction is dodecanoyl-CoA + 1-hexadecanoyl-sn-glycero-3-phosphocholine = 1-hexadecanoyl-2-dodecanoyl-sn-glycero-3-phosphocholine + CoA. It catalyses the reaction octadecanoyl-CoA + 1-hexadecanoyl-sn-glycero-3-phosphocholine = 1-hexadecanoyl-2-octadecanoyl-sn-glycero-3-phosphocholine + CoA. The enzyme catalyses 1-dodecanoyl-sn-glycero-3-phosphocholine + hexadecanoyl-CoA = 1-dodecanoyl-2-hexadecanoyl-sn-glycero-3-phosphocholine + CoA. It carries out the reaction 1-tetradecanoyl-sn-glycero-3-phosphocholine + hexadecanoyl-CoA = 1-tetradecanoyl-2-hexadecanoyl-sn-glycero-3-phosphocholine + CoA. The catalysed reaction is 1-hexadecanoyl-sn-glycero-3-phosphocholine + hexadecanoyl-CoA = 1,2-dihexadecanoyl-sn-glycero-3-phosphocholine + CoA. It catalyses the reaction 1-octadecanoyl-sn-glycero-3-phosphocholine + hexadecanoyl-CoA = 1-octadecanoyl-2-hexadecanoyl-sn-glycero-3-phosphocholine + CoA. The enzyme catalyses 1-(9Z-octadecenoyl)-sn-glycero-3-phosphocholine + hexadecanoyl-CoA = 1-(9Z-octadecenoyl)-2-hexadecanoyl-sn-glycero-3-phosphocholine + CoA. It carries out the reaction (9Z)-hexadecenoyl-CoA + 1-hexadecanoyl-sn-glycero-3-phosphocholine = 1-hexadecanoyl-2-(9Z-hexadecenoyl)-sn-glycero-3-phosphocholine + CoA. The catalysed reaction is 1-hexadecanoyl-sn-glycero-3-phosphocholine + (9Z)-octadecenoyl-CoA = 1-hexadecanoyl-2-(9Z-octadecenoyl)-sn-glycero-3-phosphocholine + CoA. It catalyses the reaction (9Z,12Z)-octadecadienoyl-CoA + 1-hexadecanoyl-sn-glycero-3-phosphocholine = 1-hexadecanoyl-2-(9Z,12Z-octadecadienoyl)-sn-glycero-3-phosphocholine + CoA. The enzyme catalyses 1-dodecanoyl-sn-glycero-3-phosphocholine + (5Z,8Z,11Z,14Z)-eicosatetraenoyl-CoA = 1-dodecanoyl-2-(5Z,8Z,11Z,14Z)-eicosatetraenoyl-sn-glycero-3-phosphocholine + CoA. It carries out the reaction (5Z,8Z,11Z,14Z)-eicosatetraenoyl-CoA + 1-hexadecanoyl-sn-glycero-3-phosphocholine = 1-hexadecanoyl-2-(5Z,8Z,11Z,14Z-eicosatetraenoyl)-sn-glycero-3-phosphocholine + CoA. The catalysed reaction is 1-octadecanoyl-sn-glycero-3-phosphocholine + (5Z,8Z,11Z,14Z)-eicosatetraenoyl-CoA = 1-octadecanoyl-2-(5Z,8Z,11Z,14Z-eicosatetraenoyl)-sn-glycero-3-phosphocholine + CoA. It catalyses the reaction 1-eicosanoyl-sn-glycero-3-phosphocholine + (5Z,8Z,11Z,14Z)-eicosatetraenoyl-CoA = 1-eicosanoyl-2-(5Z,8Z,11Z,14Z)-eicosatetraenoyl-sn-glycero-3-phosphocholine + CoA. The enzyme catalyses 1-(9Z-octadecenoyl)-sn-glycero-3-phosphocholine + (9Z)-octadecenoyl-CoA = 1,2-di-(9Z-octadecenoyl)-sn-glycero-3-phosphocholine + CoA. It carries out the reaction 1-(9Z-octadecenoyl)-sn-glycero-3-phosphocholine + (9Z,12Z)-octadecadienoyl-CoA = 1-(9Z)-octadecenoyl-2-(9Z,12Z)-octadecadienoyl-sn-glycero-3-phosphocholine + CoA. The catalysed reaction is 1-(9Z-octadecenoyl)-sn-glycero-3-phosphocholine + (5Z,8Z,11Z,14Z)-eicosatetraenoyl-CoA = 1-(9Z)-octadecenoyl-2-(5Z,8Z,11Z,14Z)-icosatetraenoyl-sn-glycero-3-phosphocholine + CoA. It catalyses the reaction a 1-acyl-sn-glycero-3-phosphoethanolamine + (9Z,12Z)-octadecadienoyl-CoA = 1-acyl-2-(9Z,12Z)-octadecadienoyl-sn-glycero-3-phosphoethanolamine + CoA. The enzyme catalyses 1-(9Z-octadecenoyl)-sn-glycero-3-phosphoethanolamine + (9Z,12Z)-octadecadienoyl-CoA = 1-(9Z)-octadecenoyl-2-(9Z,12Z)-octadecadienoyl-sn-glycero-3-phosphoethanolamine + CoA. It carries out the reaction 1-(10Z-heptadecenoyl)-sn-glycero-3-phosphoethanolamine + (9Z,12Z)-octadecadienoyl-CoA = 1-(10Z-heptadecenoyl)-2-(9Z,12Z-octadecadienoyl)-sn-glycero-3-phosphoethanolamine + CoA. The catalysed reaction is a 1-acyl-sn-glycero-3-phosphoethanolamine + (5Z,8Z,11Z,14Z)-eicosatetraenoyl-CoA = 1-acyl-2-(5Z,8Z,11Z,14Z)-eicosatetraenoyl-sn-glycero-3-phosphoethanolamine + CoA. It catalyses the reaction 1-hexadecanoyl-sn-glycero-3-phosphoethanolamine + (5Z,8Z,11Z,14Z)-eicosatetraenoyl-CoA = 1-hexadecanoyl-2-(5Z,8Z,11Z,14Z-eicosatetraenoyl)-sn-glycero-3-phosphoethanolamine + CoA. The enzyme catalyses 1-(9Z-octadecenoyl)-sn-glycero-3-phosphoethanolamine + (5Z,8Z,11Z,14Z)-eicosatetraenoyl-CoA = 1-(9Z)-octadecenoyl-2-(5Z,8Z,11Z,14Z)-eicosatetraenoyl-sn-glycero-3-phosphoethanolamine + CoA. It carries out the reaction 1-(10Z-heptadecenoyl)-sn-glycero-3-phosphoethanolamine + (5Z,8Z,11Z,14Z)-eicosatetraenoyl-CoA = 1-(10Z-heptadecenoyl)-2-(5Z,8Z,11Z,14Z-eicosatetraenoyl)-sn-glycero-3-phosphoethanolamine + CoA. The catalysed reaction is a 1-O-(1Z-alkenyl)-sn-glycero-3-phosphoethanolamine + (5Z,8Z,11Z,14Z)-eicosatetraenoyl-CoA = 1-O-(1Z)-alkenyl-2-(5Z,8Z,11Z,14Z)-eicosatetraenoyl-sn-glycero-3-phosphoethanolamine + CoA. It catalyses the reaction a 1-acyl-sn-glycero-3-phospho-L-serine + (9Z,12Z)-octadecadienoyl-CoA = 1-acyl-2-(9Z,12Z-octadecadienoyl)-sn-glycero-3-phospho-L-serine + CoA. The enzyme catalyses a 1-acyl-sn-glycero-3-phospho-L-serine + (5Z,8Z,11Z,14Z)-eicosatetraenoyl-CoA = 1-acyl-2-(5Z,8Z,11Z,14Z-eicosatetraenoyl)-sn-glycero-3-phospho-L-serine + CoA. It carries out the reaction 1-hexadecanoyl-sn-glycero-3-phospho-L-serine + (9Z)-octadecenoyl-CoA = 1-hexadecanoyl-2-(9Z-octadecenoyl)-sn-glycero-3-phospho-L-serine + CoA. The catalysed reaction is 1-(9Z-octadecenoyl)-sn-glycero-3-phospho-L-serine + (9Z)-octadecenoyl-CoA = 1,2-di-(9Z)-octadecenoyl-sn-glycero-3-phospho-L-serine + CoA. It catalyses the reaction 1-hexadecanoyl-sn-glycero-3-phospho-L-serine + (9Z,12Z)-octadecadienoyl-CoA = 1-hexadecanoyl-2-(9Z,12Z-octadecadienoyl)-sn-glycero-3-phospho-L-serine + CoA. The enzyme catalyses 1-(9Z-octadecenoyl)-sn-glycero-3-phospho-L-serine + (9Z,12Z)-octadecadienoyl-CoA = 1-(9Z-octadecenoyl)-2-(9Z,12Z-octadienoyl)-sn-glycero-3-phospho-L-serine + CoA. It carries out the reaction 1-hexadecanoyl-sn-glycero-3-phospho-L-serine + (5Z,8Z,11Z,14Z)-eicosatetraenoyl-CoA = 1-hexadecanoyl-2-(5Z,8Z,11Z,14Z-eicosatetraenoyl)-sn-glycero-3-phospho-L-serine + CoA. The catalysed reaction is 1-(9Z-octadecenoyl)-sn-glycero-3-phospho-L-serine + (5Z,8Z,11Z,14Z)-eicosatetraenoyl-CoA = 1-(9Z-octadecenoyl)-2-(5Z,8Z,11Z,14Z-eicosatetraenoyl)-sn-glycero-3-phospho-L-serine + CoA. The protein operates within lipid metabolism; phospholipid metabolism. Lysophospholipid O-acyltransferase (LPLAT) that catalyzes the reacylation step of the phospholipid remodeling process also known as the Lands cycle. Catalyzes transfer of the fatty acyl chain from fatty acyl-CoA to 1-acyl lysophospholipid to form various classes of phospholipids. Converts 1-acyl lysophosphatidylcholine (LPC) into phosphatidylcholine (PC) (LPCAT activity), 1-acyl lysophosphatidylserine (LPS) into phosphatidylserine (PS) (LPSAT activity) and 1-acyl lysophosphatidylethanolamine (LPE) into phosphatidylethanolamine (PE) (LPEAT activity). Favors polyunsaturated fatty acyl-CoAs as acyl donors compared to saturated fatty acyl-CoAs. Has higher activity for LPC acyl acceptors compared to LPEs and LPSs. Can also transfer the fatty acyl chain from fatty acyl-CoA to 1-O-alkyl lysophospholipid or 1-O-alkenyl lysophospholipid with lower efficiency. Acts as a major LPC O-acyltransferase in liver and intestine. As a component of the liver X receptor/NR1H3 or NR1H2 signaling pathway, mainly catalyzes the incorporation of arachidonate into PCs of endoplasmic reticulum (ER) membranes, increasing membrane dynamics and enabling triacylglycerols transfer to nascent very low-density lipoprotein (VLDL) particles. Promotes processing of sterol regulatory protein SREBF1 in hepatocytes, likely by facilitating the translocation of SREBF1-SCAP complex from ER to the Golgi apparatus. Participates in mechanisms by which the liver X receptor/NR1H3 or NR1H2 signaling pathway counteracts lipid-induced ER stress response and inflammation. Down-regulates hepatic inflammation by limiting arachidonic acid availability for synthesis of inflammatory eicosanoids, such as prostaglandins. In enterocytes, acts as a component of a gut-brain feedback loop that coordinates dietary lipid absorption and food intake. Regulates the abundance of PCs containing linoleate and arachidonate in enterocyte membranes, enabling passive diffusion of fatty acids and cholesterol across the membrane for efficient chylomicron assembly. In the intestinal crypt, acts as a component of dietary-responsive phospholipid-cholesterol axis, regulating the biosynthesis of cholesterol and its mitogenic effects on intestinal stem cells. In Bos taurus (Bovine), this protein is Lysophospholipid acyltransferase 5 (LPCAT3).